Consider the following 290-residue polypeptide: Protein ORF27 (290 aa).

The polypeptide is Protein ORF27 (ORF27) (Human herpesvirus 8 type P (isolate GK18) (HHV-8)).